A 726-amino-acid chain; its full sequence is Catalase-peroxidase (726 aa).

Residues 1 to 33 (MSTSDDIHNTTATGKCPFHQGGHDQSAGAGTTT) form a disordered region. The segment at residues 105–226 (WHGAGTYRSI…LGATEMGLIY (122 aa)) is a cross-link (tryptophyl-tyrosyl-methioninium (Trp-Tyr) (with M-252)). Histidine 106 (proton acceptor) is an active-site residue. The segment at residues 226-252 (YVNPEGPDHSGEPLSAAAAIRATFGNM) is a cross-link (tryptophyl-tyrosyl-methioninium (Tyr-Met) (with W-105)). Histidine 267 contributes to the heme b binding site.

Belongs to the peroxidase family. Peroxidase/catalase subfamily. In terms of assembly, homodimer or homotetramer. It depends on heme b as a cofactor. Post-translationally, formation of the three residue Trp-Tyr-Met cross-link is important for the catalase, but not the peroxidase activity of the enzyme.

The enzyme catalyses H2O2 + AH2 = A + 2 H2O. The catalysed reaction is 2 H2O2 = O2 + 2 H2O. Bifunctional enzyme with both catalase and broad-spectrum peroxidase activity. This Shigella flexneri protein is Catalase-peroxidase.